Reading from the N-terminus, the 201-residue chain is 5'(3')-deoxyribonucleotidase, cytosolic type (201 aa).

Residue D10 is the Nucleophile of the active site. Residues D10 and D12 each contribute to the Mg(2+) site. Residue D12 is the Proton donor of the active site. Substrate is bound by residues F18, F44, Y65, T99, and K134. D145 contributes to the Mg(2+) binding site. The residue at position 182 (S182) is a Phosphoserine.

The protein belongs to the 5'(3')-deoxyribonucleotidase family. Homodimer. Mg(2+) serves as cofactor. As to expression, detected in skeletal muscle, heart and pancreas.

The protein localises to the cytoplasm. Functionally, dephosphorylates the 5' and 2'(3')-phosphates of deoxyribonucleotides, with a preference for dUMP and dTMP, intermediate activity towards dGMP, and low activity towards dCMP and dAMP. The polypeptide is 5'(3')-deoxyribonucleotidase, cytosolic type (NT5C) (Homo sapiens (Human)).